Reading from the N-terminus, the 132-residue chain is UPF0102 protein Ajs_0414 (132 aa).

The segment at 1–23 is disordered; the sequence is MGFLGKKVNGSAPARTTRAAGQA.

Belongs to the UPF0102 family.

This chain is UPF0102 protein Ajs_0414, found in Acidovorax sp. (strain JS42).